The chain runs to 1686 residues: Thrombospondin type-1 domain-containing protein 7A (1686 aa).

An N-terminal signal peptide occupies residues 1–36; it reads MGLASRAPGKGGTSAGALASLFRVALLFFGLWDVQT. The Extracellular segment spans residues 37-1635; that stretch reads QTVANTRPTY…FGPDGKLKTW (1599 aa). TSP type-1 domains are found at residues 44–103, 107–181, and 183–236; these read PTYI…RVCD, ELYD…IPCP, and DCVV…GKCE. N-linked (GlcNAc...) asparagine glycosylation occurs at N223. Residues 257–321 form a disordered region; it reads IRQARDTGEA…EKKRMRDPET (65 aa). 2 stretches are compositionally biased toward basic and acidic residues: residues 259 to 272 and 294 to 321; these read QARDTGEARVPKAE and EKKELRESKGERVRERVKEKKRMRDPET. TSP type-1 domains lie at 385-441, 448-535, 537-596, 656-717, 718-797, 799-859, 860-932, 934-985, 988-1061, 1063-1123, 1124-1191, 1193-1247, 1248-1311, 1313-1368, 1369-1439, and 1441-1502; these read DCEV…SPQG, VVYN…IPCP, ECEV…PSCY, DCVL…HPCT, VYHW…LPCK, DCVV…SVCP, GYRW…LPCQ, DCQL…QYCP, KYNA…IPCP, DCKL…SDCS, QYVW…LPCP, DCVL…SNCF, HYSY…VECP, NCQL…KPCF, SWRY…VPCP, and ECYL…GQCY. Intrachain disulfides connect C460–C530, C480–C534, and C491–C519. N-linked (GlcNAc...) asparagine glycosylation is present at N475. A glycan (N-linked (GlcNAc...) asparagine) is linked at N525. Cystine bridges form between C657–C699 and C668–C672. A glycan (N-linked (GlcNAc...) asparagine) is linked at N701. Intrachain disulfides connect C711–C716, C729–C792, C756–C796, C767–C780, C800–C842, C811–C815, and C852–C858. N739 carries N-linked (GlcNAc...) asparagine glycosylation. N-linked (GlcNAc...) asparagine glycosylation occurs at N996. Intrachain disulfides connect C1000-C1056, C1022-C1060, C1033-C1046, C1064-C1101, C1075-C1079, and C1118-C1122. The N-linked (GlcNAc...) asparagine glycan is linked to N1071. A glycan (N-linked (GlcNAc...) asparagine) is linked at N1212. A disulfide bond links C1240 and C1246. Residue N1252 is glycosylated (N-linked (GlcNAc...) asparagine). 12 disulfide bridges follow: C1259–C1306, C1267–C1310, C1278–C1291, C1314–C1352, C1325–C1329, C1362–C1367, C1378–C1434, C1385–C1438, C1396–C1415, C1442–C1486, C1453–C1457, and C1496–C1501. N1303 is a glycosylation site (N-linked (GlcNAc...) asparagine). N-linked (GlcNAc...) asparagine glycosylation is present at N1393. A glycan (N-linked (GlcNAc...) asparagine) is linked at N1527. A helical transmembrane segment spans residues 1636 to 1656; it reads VYGVAAGAFVLLVFIVSMTYL. The Cytoplasmic portion of the chain corresponds to 1657 to 1686; it reads ACKKPKKPQRRQMNNRLKPLTLAYDGDADM.

Extensively N-glycosylated.

It is found in the cell membrane. Its subcellular location is the cell projection. Functionally, required for normal sprouting angiogenesis and normal embryonic development of intersegmental vessels (ISV). Required for normal function of the glomerular filtration barrier. Required for normal axon outgrowth on embryonic motor neurons at the level of the horizontal myoseptum. Required for normal expression of notch1b, suggesting that its functions in angiogenesis and neuron outgrowth are due to decreased expression of notch1b. Plays a role in actin cytoskeleton rearrangement. The protein is Thrombospondin type-1 domain-containing protein 7A of Danio rerio (Zebrafish).